The following is a 459-amino-acid chain: N(6)-adenosine-methyltransferase non-catalytic subunit METTL14 (459 aa).

A disordered region spans residues 50–73 (TCRASYDTSAPNAKRKYPDEGEAD). Interaction with METTL3 stretches follow at residues 135–136 (RD) and 237–238 (SG). A positively charged region required for RNA-binding region spans residues 245 to 254 (RVCLRKWGYR). Interaction with METTL3 stretches follow at residues 255–258 (RCED) and 278–287 (KAVFQRTKEH). Residues 297–298 (RR) are positively charged region required for RNA-binding. Positions 308–312 (NVDID) are interaction with METTL3. The segment at 392 to 459 (IERLRPKSPP…GTHRGGFPTR (68 aa)) is disordered. Over residues 409–423 (GGGAPRGGGRGGTSA) the composition is skewed to gly residues. Basic and acidic residues predominate over residues 425-443 (RGERGRERNRTNFRGERGG). Positions 444–453 (FRGGRGGTHR) are enriched in gly residues.

Belongs to the MT-A70-like family. In terms of assembly, heterodimer; heterodimerizes with METTL3 to form an antiparallel heterodimer that constitutes an active methyltransferase. Component of the WMM complex, a N6-methyltransferase complex composed of a catalytic subcomplex, named MAC, and of an associated subcomplex, named MACOM. The MAC subcomplex is composed of METTL3 and METTL14.

The protein localises to the nucleus. In terms of biological role, the METTL3-METTL14 heterodimer forms a N6-methyltransferase complex that methylates adenosine residues at the N(6) position of some mRNAs and regulates the circadian clock, differentiation of embryonic stem cells and cortical neurogenesis. In the heterodimer formed with METTL3, METTL14 constitutes the RNA-binding scaffold that recognizes the substrate rather than the catalytic core. N6-methyladenosine (m6A), which takes place at the 5'-[AG]GAC-3' consensus sites of some mRNAs, plays a role in mRNA stability and processing. This is N(6)-adenosine-methyltransferase non-catalytic subunit METTL14 (METTL14) from Gallus gallus (Chicken).